Consider the following 214-residue polypeptide: Urease accessory protein UreG (214 aa).

Positions 1–20 (MSQLHAVPGRTKKLPPLRVG) are disordered. 23 to 30 (GPVGSGKT) is a binding site for GTP.

The protein belongs to the SIMIBI class G3E GTPase family. UreG subfamily. In terms of assembly, homodimer. UreD, UreF and UreG form a complex that acts as a GTP-hydrolysis-dependent molecular chaperone, activating the urease apoprotein by helping to assemble the nickel containing metallocenter of UreC. The UreE protein probably delivers the nickel.

The protein localises to the cytoplasm. Functionally, facilitates the functional incorporation of the urease nickel metallocenter. This process requires GTP hydrolysis, probably effectuated by UreG. In Leptothrix cholodnii (strain ATCC 51168 / LMG 8142 / SP-6) (Leptothrix discophora (strain SP-6)), this protein is Urease accessory protein UreG.